The chain runs to 570 residues: Glutamate--tRNA ligase (570 aa).

The 'HIGH' region motif lies at 107–117 (PNPDFVLHLGS).

Belongs to the class-I aminoacyl-tRNA synthetase family. Glutamate--tRNA ligase type 2 subfamily.

Its subcellular location is the cytoplasm. It carries out the reaction tRNA(Glu) + L-glutamate + ATP = L-glutamyl-tRNA(Glu) + AMP + diphosphate. In terms of biological role, catalyzes the attachment of glutamate to tRNA(Glu) in a two-step reaction: glutamate is first activated by ATP to form Glu-AMP and then transferred to the acceptor end of tRNA(Glu). This chain is Glutamate--tRNA ligase, found in Pyrobaculum islandicum (strain DSM 4184 / JCM 9189 / GEO3).